The sequence spans 215 residues: uncharacterized protein (215 aa).

Residues S114, D162, and H194 each act as charge relay system in the active site.

The protein belongs to the AB hydrolase superfamily. AB hydrolase 2 family.

This is an uncharacterized protein from Rickettsia felis (strain ATCC VR-1525 / URRWXCal2) (Rickettsia azadi).